Here is a 376-residue protein sequence, read N- to C-terminus: Chorismate synthase ARO2 (376 aa).

S2 carries the post-translational modification N-acetylserine. The active site involves H17. The interval 39–61 (IQPQLTRRRPGQSKLSTPRDEKD) is disordered. Residues H104 and D339 contribute to the active site.

It belongs to the chorismate synthase family. In terms of assembly, homotetramer.

The catalysed reaction is 5-O-(1-carboxyvinyl)-3-phosphoshikimate = chorismate + phosphate. It catalyses the reaction FMNH2 + NADP(+) = FMN + NADPH + 2 H(+). Its pathway is metabolic intermediate biosynthesis; chorismate biosynthesis; chorismate from D-erythrose 4-phosphate and phosphoenolpyruvate: step 7/7. Its function is as follows. Bifunctional chorismate synthase and flavin reductase that catalyzes the conversion of 5-enolpyruvylshikimate 3-phosphate (EPSP) to form chorismate, which is the last common intermediate in the synthesis of the three aromatic amino acids phenylalanine, tyrosine and tryptophan. Also acts as a flavin reductase (FR) able to generate reduced flavin mononucleotide in the presence of NADPH. This Saccharomyces cerevisiae (strain ATCC 204508 / S288c) (Baker's yeast) protein is Chorismate synthase ARO2.